An 897-amino-acid polypeptide reads, in one-letter code: DNA mismatch repair protein MutS (897 aa).

654 to 661 (GPNMAGKS) lines the ATP pocket.

This sequence belongs to the DNA mismatch repair MutS family.

This protein is involved in the repair of mismatches in DNA. It is possible that it carries out the mismatch recognition step. This protein has a weak ATPase activity. The chain is DNA mismatch repair protein MutS from Maricaulis maris (strain MCS10) (Caulobacter maris).